The chain runs to 642 residues: Chaperone protein DnaK (642 aa).

T198 carries the phosphothreonine; by autocatalysis modification. Residues 578 to 589 are compositionally biased toward basic and acidic residues; it reads DDKEAIESRMQK. Residues 578-642 form a disordered region; the sequence is DDKEAIESRM…FEEVKDGDKK (65 aa). The segment covering 603 to 619 has biased composition (low complexity); it reads AEQAAQQGGDAGAQAED.

This sequence belongs to the heat shock protein 70 family.

Acts as a chaperone. The protein is Chaperone protein DnaK of Hahella chejuensis (strain KCTC 2396).